The following is a 136-amino-acid chain: NLP effector protein 13 (136 aa).

The Conserved undecapeptide motif I signature appears at 1 to 9 (MYSWYFPKD). Residues 16–22 (GHRHDWE) carry the Hepta-peptide GHRHDWE motif II motif.

This sequence belongs to the Necrosis inducing protein (NPP1) family.

The protein resides in the secreted. In terms of biological role, secreted effector that contributes moderately to virulence during infection by P.capsici. Causes only small yellow areas at 3 days after inoculation of host C.annuum leaves; these areas expand somewhat and became necrotic at 7 days after inoculation. Leads only to chlorotic areas, without necrosis at 7 days after non-host N.benthamiana leaves infection. In Phytophthora capsici, this protein is NLP effector protein 13.